Reading from the N-terminus, the 132-residue chain is Fatty acid-binding protein, brain (132 aa).

Residue valine 2 is modified to N-acetylvaline. Residue 127–129 (RHY) participates in a fatty acid binding.

Belongs to the calycin superfamily. Fatty-acid binding protein (FABP) family. In terms of assembly, monomer.

It localises to the cytoplasm. FABPs are thought to play a role in the intracellular transport of long-chain fatty acids and their acyl-CoA esters. Binds oleic and palmitic acids but not palmitoyl CoA. In Bos taurus (Bovine), this protein is Fatty acid-binding protein, brain (FABP7).